Consider the following 548-residue polypeptide: ATP synthase subunit alpha (548 aa).

172–179 (GDRKTGKT) lines the ATP pocket. Positions 510-548 (QFTTSSGESAAPSEPEAEALAADEVGQETVKVNRPAPKK) are disordered. Positions 514 to 531 (SSGESAAPSEPEAEALAA) are enriched in low complexity.

Belongs to the ATPase alpha/beta chains family. As to quaternary structure, F-type ATPases have 2 components, CF(1) - the catalytic core - and CF(0) - the membrane proton channel. CF(1) has five subunits: alpha(3), beta(3), gamma(1), delta(1), epsilon(1). CF(0) has three main subunits: a(1), b(2) and c(9-12). The alpha and beta chains form an alternating ring which encloses part of the gamma chain. CF(1) is attached to CF(0) by a central stalk formed by the gamma and epsilon chains, while a peripheral stalk is formed by the delta and b chains.

The protein resides in the cell membrane. It catalyses the reaction ATP + H2O + 4 H(+)(in) = ADP + phosphate + 5 H(+)(out). Produces ATP from ADP in the presence of a proton gradient across the membrane. The alpha chain is a regulatory subunit. This is ATP synthase subunit alpha from Saccharopolyspora erythraea (strain ATCC 11635 / DSM 40517 / JCM 4748 / NBRC 13426 / NCIMB 8594 / NRRL 2338).